The chain runs to 515 residues: 3,4-dehydroadipyl-CoA semialdehyde dehydrogenase (515 aa).

Catalysis depends on residues E255 and C294. The interval 470–515 is disordered; that stretch reads VMPTCLHGGPRARRRRRGVGRSARAGDVSPPLRRAGRPRGAGSPVA. The span at 479–488 shows a compositional bias: basic residues; sequence PRARRRRRGV. Over residues 489-515 the composition is skewed to low complexity; that stretch reads GRSARAGDVSPPLRRAGRPRGAGSPVA.

It belongs to the aldehyde dehydrogenase family. As to quaternary structure, homodimer.

It catalyses the reaction (3Z)-6-oxohex-3-enoyl-CoA + NADP(+) + H2O = cis-3,4-dehydroadipyl-CoA + NADPH + 2 H(+). Its function is as follows. Catalyzes the NADP-dependent oxidation of 3,4-dehydroadipyl-CoA semialdehyde to form cis-3,4-dehydroadipyl-CoA. The protein is 3,4-dehydroadipyl-CoA semialdehyde dehydrogenase (boxD) of Aromatoleum evansii (Azoarcus evansii).